The primary structure comprises 502 residues: ATP synthase subunit alpha (502 aa).

G169–T176 is a binding site for ATP.

The protein belongs to the ATPase alpha/beta chains family. As to quaternary structure, F-type ATPases have 2 components, CF(1) - the catalytic core - and CF(0) - the membrane proton channel. CF(1) has five subunits: alpha(3), beta(3), gamma(1), delta(1), epsilon(1). CF(0) has three main subunits: a(1), b(2) and c(9-12). The alpha and beta chains form an alternating ring which encloses part of the gamma chain. CF(1) is attached to CF(0) by a central stalk formed by the gamma and epsilon chains, while a peripheral stalk is formed by the delta and b chains.

It localises to the cell membrane. It catalyses the reaction ATP + H2O + 4 H(+)(in) = ADP + phosphate + 5 H(+)(out). Functionally, produces ATP from ADP in the presence of a proton gradient across the membrane. The alpha chain is a regulatory subunit. The polypeptide is ATP synthase subunit alpha (Lachnoclostridium phytofermentans (strain ATCC 700394 / DSM 18823 / ISDg) (Clostridium phytofermentans)).